The primary structure comprises 419 residues: Inositol-tetrakisphosphate 1-kinase (419 aa).

Lys18 is a 1D-myo-inositol 1,3,4-trisphosphate binding site. ATP is bound by residues Arg106 and Lys157. Residues 117–334 form the ATP-grasp domain; sequence EAYMKDDRIC…TGGAATEEVA (218 aa). 1D-myo-inositol 1,3,4-trisphosphate-binding residues include His167 and Lys199. ATP contacts are provided by residues 188-199, Ser214, Ser232, and Ser236; that span reads QNFINHNAVLYK. Mg(2+) is bound by residues Asp281, Asp295, and Asn297. 1D-myo-inositol 1,3,4-trisphosphate is bound at residue Asn297. At Lys388 the chain carries N6-acetyllysine; by EP300 and CREBBP. At Ser401 the chain carries Phosphoserine. Lys415 is modified (N6-acetyllysine; by EP300 and CREBBP).

It belongs to the ITPK1 family. Monomer. Interacts with GPS1/COPS1. Mg(2+) serves as cofactor. Acetylation by EP300 and CREBBP destabilizes ITPK1, and down-regulates enzymatic activity. Deacetylated by SIRT1.

It carries out the reaction 1D-myo-inositol 3,4,5,6-tetrakisphosphate + ATP = 1D-myo-inositol 1,3,4,5,6-pentakisphosphate + ADP + H(+). It catalyses the reaction 1D-myo-inositol 1,3,4-trisphosphate + ATP = 1D-myo-inositol 1,3,4,5-tetrakisphosphate + ADP + H(+). The enzyme catalyses 1D-myo-inositol 1,3,4-trisphosphate + ATP = 1D-myo-inositol 1,3,4,6-tetrakisphosphate + ADP + H(+). The catalysed reaction is 1D-myo-inositol 3,4,6-trisphosphate + ATP = 1D-myo-inositol 1,3,4,6-tetrakisphosphate + ADP + H(+). It carries out the reaction 1D-myo-inositol 1,3,4-trisphosphate + 1D-myo-inositol 1,3,4,5,6-pentakisphosphate = 1D-myo-inositol 3,4,5,6-tetrakisphosphate + 1D-myo-inositol 1,3,4,6-tetrakisphosphate. It catalyses the reaction 1D-myo-inositol 1,3,4-trisphosphate + 1D-myo-inositol 1,3,4,5,6-pentakisphosphate = 1D-myo-inositol 3,4,5,6-tetrakisphosphate + 1D-myo-inositol 1,3,4,5-tetrakisphosphate. In terms of biological role, kinase that can phosphorylate various inositol polyphosphate such as Ins(3,4,5,6)P4 or Ins(1,3,4)P3. Phosphorylates Ins(3,4,5,6)P4 at position 1 to form Ins(1,3,4,5,6)P5. This reaction is thought to have regulatory importance, since Ins(3,4,5,6)P4 is an inhibitor of plasma membrane Ca(2+)-activated Cl(-) channels, while Ins(1,3,4,5,6)P5 is not. Also phosphorylates Ins(1,3,4)P3 on O-5 and O-6 to form Ins(1,3,4,6)P4, an essential molecule in the hexakisphosphate (InsP6) pathway. Also acts as an inositol polyphosphate phosphatase that dephosphorylates Ins(1,3,4,5)P4 and Ins(1,3,4,6)P4 to Ins(1,3,4)P3, and Ins(1,3,4,5,6)P5 to Ins(3,4,5,6)P4. May also act as an isomerase that interconverts the inositol tetrakisphosphate isomers Ins(1,3,4,5)P4 and Ins(1,3,4,6)P4 in the presence of ADP and magnesium. Probably acts as the rate-limiting enzyme of the InsP6 pathway. Modifies TNF-alpha-induced apoptosis by interfering with the activation of TNFRSF1A-associated death domain. Plays an important role in MLKL-mediated necroptosis. Produces highly phosphorylated inositol phosphates such as inositolhexakisphosphate (InsP6) which bind to MLKL mediating the release of an N-terminal auto-inhibitory region leading to its activation. Essential for activated phospho-MLKL to oligomerize and localize to the cell membrane during necroptosis. This is Inositol-tetrakisphosphate 1-kinase from Mus musculus (Mouse).